A 156-amino-acid polypeptide reads, in one-letter code: Snaclec A2 (156 aa).

The first 23 residues, Met-1–Ala-23, serve as a signal peptide directing secretion. 3 cysteine pairs are disulfide-bonded: Cys-27–Cys-38, Cys-55–Cys-154, and Cys-129–Cys-146. The 122-residue stretch at His-34–Glu-155 folds into the C-type lectin domain.

Belongs to the snaclec family. In terms of assembly, heterodimer; disulfide-linked. As to expression, expressed by the venom gland.

Its subcellular location is the secreted. In terms of biological role, interferes with one step of hemostasis (modulation of platelet aggregation, or coagulation cascade, for example). This is Snaclec A2 from Macrovipera lebetinus (Levantine viper).